Here is a 384-residue protein sequence, read N- to C-terminus: tRNA-specific 2-thiouridylase MnmA (384 aa).

Residues alanine 18 to serine 25 and leucine 44 each bind ATP. Cysteine 112 acts as the Nucleophile in catalysis. A disulfide bond links cysteine 112 and cysteine 209. Position 136 (glycine 136) interacts with ATP. Positions arginine 159 to glutamine 161 are interaction with tRNA. Residue cysteine 209 is the Cysteine persulfide intermediate of the active site.

This sequence belongs to the MnmA/TRMU family.

Its subcellular location is the cytoplasm. It catalyses the reaction S-sulfanyl-L-cysteinyl-[protein] + uridine(34) in tRNA + AH2 + ATP = 2-thiouridine(34) in tRNA + L-cysteinyl-[protein] + A + AMP + diphosphate + H(+). In terms of biological role, catalyzes the 2-thiolation of uridine at the wobble position (U34) of tRNA, leading to the formation of s(2)U34. The polypeptide is tRNA-specific 2-thiouridylase MnmA (Methylobacterium radiotolerans (strain ATCC 27329 / DSM 1819 / JCM 2831 / NBRC 15690 / NCIMB 10815 / 0-1)).